Here is a 481-residue protein sequence, read N- to C-terminus: tRNA-2-methylthio-N(6)-dimethylallyladenosine synthase (481 aa).

One can recognise an MTTase N-terminal domain in the interval Lys-24–Glu-140. [4Fe-4S] cluster is bound by residues Cys-33, Cys-69, Cys-103, Cys-178, Cys-182, and Cys-185. Positions Met-164–Arg-411 constitute a Radical SAM core domain. Residues Glu-413 to Gly-476 form the TRAM domain.

The protein belongs to the methylthiotransferase family. MiaB subfamily. As to quaternary structure, monomer. The cofactor is [4Fe-4S] cluster.

The protein resides in the cytoplasm. It carries out the reaction N(6)-dimethylallyladenosine(37) in tRNA + (sulfur carrier)-SH + AH2 + 2 S-adenosyl-L-methionine = 2-methylsulfanyl-N(6)-dimethylallyladenosine(37) in tRNA + (sulfur carrier)-H + 5'-deoxyadenosine + L-methionine + A + S-adenosyl-L-homocysteine + 2 H(+). In terms of biological role, catalyzes the methylthiolation of N6-(dimethylallyl)adenosine (i(6)A), leading to the formation of 2-methylthio-N6-(dimethylallyl)adenosine (ms(2)i(6)A) at position 37 in tRNAs that read codons beginning with uridine. The polypeptide is tRNA-2-methylthio-N(6)-dimethylallyladenosine synthase (Flavobacterium johnsoniae (strain ATCC 17061 / DSM 2064 / JCM 8514 / BCRC 14874 / CCUG 350202 / NBRC 14942 / NCIMB 11054 / UW101) (Cytophaga johnsonae)).